Reading from the N-terminus, the 57-residue chain is Granulin-2 (57 aa).

Disulfide bonds link Cys-4–Cys-16 and Cys-10–Cys-26.

It belongs to the granulin family. Post-translationally, granulins are disulfide bridged. As to expression, ubiquitous.

It localises to the secreted. Functionally, granulins have possible cytokine-like activity. They may play a role in inflammation, wound repair, and tissue remodeling. The sequence is that of Granulin-2 from Cyprinus carpio (Common carp).